The chain runs to 511 residues: UDP-N-acetylmuramoyl-L-alanyl-D-glutamate--2,6-diaminopimelate ligase (511 aa).

Serine 30 lines the UDP-N-acetyl-alpha-D-muramoyl-L-alanyl-D-glutamate pocket. 110 to 116 (GTNGKTT) lines the ATP pocket. UDP-N-acetyl-alpha-D-muramoyl-L-alanyl-D-glutamate is bound by residues 152–153 (TT), serine 179, glutamine 185, and arginine 187. The residue at position 219 (lysine 219) is an N6-carboxylysine. Residues arginine 385, 409–412 (DNPR), glycine 476, and glutamate 480 contribute to the meso-2,6-diaminopimelate site. The Meso-diaminopimelate recognition motif signature appears at 409–412 (DNPR).

This sequence belongs to the MurCDEF family. MurE subfamily. Mg(2+) serves as cofactor. Post-translationally, carboxylation is probably crucial for Mg(2+) binding and, consequently, for the gamma-phosphate positioning of ATP.

It localises to the cytoplasm. The enzyme catalyses UDP-N-acetyl-alpha-D-muramoyl-L-alanyl-D-glutamate + meso-2,6-diaminopimelate + ATP = UDP-N-acetyl-alpha-D-muramoyl-L-alanyl-gamma-D-glutamyl-meso-2,6-diaminopimelate + ADP + phosphate + H(+). It participates in cell wall biogenesis; peptidoglycan biosynthesis. In terms of biological role, catalyzes the addition of meso-diaminopimelic acid to the nucleotide precursor UDP-N-acetylmuramoyl-L-alanyl-D-glutamate (UMAG) in the biosynthesis of bacterial cell-wall peptidoglycan. In Geobacter metallireducens (strain ATCC 53774 / DSM 7210 / GS-15), this protein is UDP-N-acetylmuramoyl-L-alanyl-D-glutamate--2,6-diaminopimelate ligase.